The primary structure comprises 190 residues: Glutathione peroxidase 2 (190 aa).

Residue Sec-40 is part of the active site. Position 40 (Sec-40) is a non-standard amino acid, selenocysteine.

It belongs to the glutathione peroxidase family. Homotetramer. As to expression, mucosal epithelium of the gastrointestinal tract.

It is found in the cytoplasm. It localises to the cytosol. The enzyme catalyses 2 glutathione + H2O2 = glutathione disulfide + 2 H2O. It carries out the reaction a hydroperoxy polyunsaturated fatty acid + 2 glutathione = a hydroxy polyunsaturated fatty acid + glutathione disulfide + H2O. The catalysed reaction is tert-butyl hydroperoxide + 2 glutathione = tert-butanol + glutathione disulfide + H2O. It catalyses the reaction cumene hydroperoxide + 2 glutathione = 2-phenylpropan-2-ol + glutathione disulfide + H2O. The enzyme catalyses (13S)-hydroperoxy-(9Z,11E)-octadecadienoate + 2 glutathione = (13S)-hydroxy-(9Z,11E)-octadecadienoate + glutathione disulfide + H2O. It carries out the reaction (5S)-hydroperoxy-(6E,8Z,11Z,14Z)-eicosatetraenoate + 2 glutathione = (5S)-hydroxy-(6E,8Z,11Z,14Z)-eicosatetraenoate + glutathione disulfide + H2O. The catalysed reaction is (12R)-hydroperoxy-(5Z,8Z,10E,14Z)-eicosatetraenoate + 2 glutathione = (12R)-hydroxy-(5Z,8Z,10E,14Z)-eicosatetraenoate + glutathione disulfide + H2O. It catalyses the reaction (15S)-hydroperoxy-(5Z,8Z,11Z,13E)-eicosatetraenoate + 2 glutathione = (15S)-hydroxy-(5Z,8Z,11Z,13E)-eicosatetraenoate + glutathione disulfide + H2O. Its function is as follows. Catalyzes the reduction of hydroperoxides in a glutathione-dependent manner thus regulating cellular redox homeostasis. Can reduce small soluble hydroperoxide such as H2O2. Can reduce cumene hydroperoxide and tert-butyl hydroperoxide, as well as several fatty acid-derived hydroperoxides. Cannot reduce phosphatidycholine hydroperoxide. In Rattus norvegicus (Rat), this protein is Glutathione peroxidase 2 (Gpx2).